A 1256-amino-acid polypeptide reads, in one-letter code: Bifunctional autolysin (1256 aa).

The signal sequence occupies residues methionine 1 to alanine 29. Residues glycine 103 to glycine 138 are compositionally biased toward polar residues. Disordered regions lie at residues glycine 103 to asparagine 151, alanine 173 to proline 219, and threonine 419 to glycine 440. Low complexity-rich tracts occupy residues alanine 173–threonine 196 and serine 421–threonine 439. The tract at residues alanine 199 to lysine 775 is N-acetylmuramoyl-L-alanine amidase. GW domains follow at residues threonine 443–alanine 517, serine 519–lysine 593, threonine 612–alanine 686, serine 688–alanine 762, threonine 784–leucine 859, lysine 861–alanine 936, and alanine 943–isoleucine 1017. The endo-beta-N-acetylglucosaminidase stretch occupies residues alanine 776–lysine 1256.

The protein in the N-terminal section; belongs to the N-acetylmuramoyl-L-alanine amidase 2 family. This sequence in the C-terminal section; belongs to the glycosyl hydrolase 73 family. Oligomer; forms a ring structure at the cell surface which is important for efficient partitioning of daughter cells after cell division. Undergoes proteolytic processing to generate the two extracellular lytic enzymes, probably at the septal region on the cell surface.

Its subcellular location is the secreted. The enzyme catalyses Hydrolyzes the link between N-acetylmuramoyl residues and L-amino acid residues in certain cell-wall glycopeptides.. It carries out the reaction an N(4)-(oligosaccharide-(1-&gt;3)-[oligosaccharide-(1-&gt;6)]-beta-D-Man-(1-&gt;4)-beta-D-GlcNAc-(1-&gt;4)-alpha-D-GlcNAc)-L-asparaginyl-[protein] + H2O = an oligosaccharide-(1-&gt;3)-[oligosaccharide-(1-&gt;6)]-beta-D-Man-(1-&gt;4)-D-GlcNAc + N(4)-(N-acetyl-beta-D-glucosaminyl)-L-asparaginyl-[protein]. Functionally, endohydrolysis of the di-N-acetylchitobiosyl unit in high-mannose glycopeptides and glycoproteins containing the -[(Man)5(GlcNAc)2]-Asn structure. One N-acetyl-D-glucosamine residue remains attached to the protein; the rest of the oligosaccharide is released intact. Cleaves the peptidoglycan connecting the daughter cells at the end of the cell division cycle, resulting in the separation of the two newly divided cells. Acts as an autolysin in penicillin-induced lysis. The polypeptide is Bifunctional autolysin (atl) (Staphylococcus aureus (strain MW2)).